Reading from the N-terminus, the 730-residue chain is 1,4-alpha-glucan branching enzyme GlgB (730 aa).

Catalysis depends on aspartate 405, which acts as the Nucleophile. Glutamate 458 functions as the Proton donor in the catalytic mechanism.

Belongs to the glycosyl hydrolase 13 family. GlgB subfamily. In terms of assembly, monomer.

The catalysed reaction is Transfers a segment of a (1-&gt;4)-alpha-D-glucan chain to a primary hydroxy group in a similar glucan chain.. It functions in the pathway glycan biosynthesis; glycogen biosynthesis. Functionally, catalyzes the formation of the alpha-1,6-glucosidic linkages in glycogen by scission of a 1,4-alpha-linked oligosaccharide from growing alpha-1,4-glucan chains and the subsequent attachment of the oligosaccharide to the alpha-1,6 position. In Haemophilus influenzae (strain PittGG), this protein is 1,4-alpha-glucan branching enzyme GlgB.